The sequence spans 498 residues: Glycerol kinase (498 aa).

An ADP-binding site is contributed by Thr-11. Positions 11, 12, and 13 each coordinate ATP. Thr-11 provides a ligand contact to sn-glycerol 3-phosphate. Residue Arg-15 coordinates ADP. Arg-81, Glu-82, Tyr-133, and Asp-242 together coordinate sn-glycerol 3-phosphate. The glycerol site is built by Arg-81, Glu-82, Tyr-133, Asp-242, and Gln-243. Residues Thr-264 and Gly-307 each contribute to the ADP site. ATP-binding residues include Thr-264, Gly-307, Gln-311, and Gly-412. ADP contacts are provided by Gly-412 and Asn-416.

It belongs to the FGGY kinase family.

The enzyme catalyses glycerol + ATP = sn-glycerol 3-phosphate + ADP + H(+). The protein operates within polyol metabolism; glycerol degradation via glycerol kinase pathway; sn-glycerol 3-phosphate from glycerol: step 1/1. With respect to regulation, inhibited by fructose 1,6-bisphosphate (FBP). Key enzyme in the regulation of glycerol uptake and metabolism. Catalyzes the phosphorylation of glycerol to yield sn-glycerol 3-phosphate. The chain is Glycerol kinase from Acidovorax sp. (strain JS42).